Here is a 316-residue protein sequence, read N- to C-terminus: ATP synthase gamma chain (316 aa).

Belongs to the ATPase gamma chain family. In terms of assembly, F-type ATPases have 2 components, CF(1) - the catalytic core - and CF(0) - the membrane proton channel. CF(1) has five subunits: alpha(3), beta(3), gamma(1), delta(1), epsilon(1). CF(0) has three main subunits: a, b and c.

The protein localises to the cellular thylakoid membrane. Its function is as follows. Produces ATP from ADP in the presence of a proton gradient across the membrane. The gamma chain is believed to be important in regulating ATPase activity and the flow of protons through the CF(0) complex. This is ATP synthase gamma chain from Prochlorococcus marinus (strain MIT 9211).